The primary structure comprises 264 residues: S-adenosylmethionine decarboxylase proenzyme (264 aa).

The active-site Schiff-base intermediate with substrate; via pyruvic acid is the serine 112. Serine 112 carries the post-translational modification Pyruvic acid (Ser); by autocatalysis. Histidine 117 acts as the Proton acceptor; for processing activity in catalysis. Cysteine 140 (proton donor; for catalytic activity) is an active-site residue.

The protein belongs to the prokaryotic AdoMetDC family. Type 2 subfamily. Heterooctamer of four alpha and four beta chains arranged as a tetramer of alpha/beta heterodimers. Requires pyruvate as cofactor. Is synthesized initially as an inactive proenzyme. Formation of the active enzyme involves a self-maturation process in which the active site pyruvoyl group is generated from an internal serine residue via an autocatalytic post-translational modification. Two non-identical subunits are generated from the proenzyme in this reaction, and the pyruvate is formed at the N-terminus of the alpha chain, which is derived from the carboxyl end of the proenzyme. The post-translation cleavage follows an unusual pathway, termed non-hydrolytic serinolysis, in which the side chain hydroxyl group of the serine supplies its oxygen atom to form the C-terminus of the beta chain, while the remainder of the serine residue undergoes an oxidative deamination to produce ammonia and the pyruvoyl group blocking the N-terminus of the alpha chain.

The catalysed reaction is S-adenosyl-L-methionine + H(+) = S-adenosyl 3-(methylsulfanyl)propylamine + CO2. Its pathway is amine and polyamine biosynthesis; S-adenosylmethioninamine biosynthesis; S-adenosylmethioninamine from S-adenosyl-L-methionine: step 1/1. Catalyzes the decarboxylation of S-adenosylmethionine to S-adenosylmethioninamine (dcAdoMet), the propylamine donor required for the synthesis of the polyamines spermine and spermidine from the diamine putrescine. This Yersinia enterocolitica serotype O:8 / biotype 1B (strain NCTC 13174 / 8081) protein is S-adenosylmethionine decarboxylase proenzyme.